The following is a 261-amino-acid chain: Cytochrome c oxidase subunit 3 (261 aa).

At 1-15 (MAHQAHAYHMVDPSP) the chain is on the mitochondrial matrix side. Residues 16–34 (WPLTGAIGALFLTSGLAIW) form a helical membrane-spanning segment. At 35–40 (FHFQSV) the chain is on the mitochondrial intermembrane side. Residues 41 to 66 (TLLTLGLILLLLTMYQWWRDIIREGT) traverse the membrane as a helical segment. Residues 67 to 72 (FQGHHT) are Mitochondrial matrix-facing. A helical transmembrane segment spans residues 73-105 (PPVQKGLRYGMILFITSEVFFFLGFFWAFYHSS). Over 106 to 128 (LAPTPELGGCWPPTGITPLDPFE) the chain is Mitochondrial intermembrane. The chain crosses the membrane as a helical span at residues 129–152 (VPLLNTAVLLASGVTVTWAHHSLM). At 153-155 (EGA) the chain is on the mitochondrial matrix side. Residues 156–183 (RKQAIQALALTIILGVYFTALQAMEYYE) form a helical membrane-spanning segment. Topologically, residues 184–190 (APFTIAD) are mitochondrial intermembrane. Residues 191–223 (GVYGSTFFVATGFHGLHVIIGSSFLAVCLLRQI) form a helical membrane-spanning segment. At 224-232 (QYHFTSEHH) the chain is on the mitochondrial matrix side. A helical membrane pass occupies residues 233-256 (FGFEAAAWYWHFVDVVWLFLYVSI). Over 257–261 (YWWGS) the chain is Mitochondrial intermembrane.

The protein belongs to the cytochrome c oxidase subunit 3 family. As to quaternary structure, component of the cytochrome c oxidase (complex IV, CIV), a multisubunit enzyme composed of 14 subunits. The complex is composed of a catalytic core of 3 subunits MT-CO1, MT-CO2 and MT-CO3, encoded in the mitochondrial DNA, and 11 supernumerary subunits COX4I, COX5A, COX5B, COX6A, COX6B, COX6C, COX7A, COX7B, COX7C, COX8 and NDUFA4, which are encoded in the nuclear genome. The complex exists as a monomer or a dimer and forms supercomplexes (SCs) in the inner mitochondrial membrane with NADH-ubiquinone oxidoreductase (complex I, CI) and ubiquinol-cytochrome c oxidoreductase (cytochrome b-c1 complex, complex III, CIII), resulting in different assemblies (supercomplex SCI(1)III(2)IV(1) and megacomplex MCI(2)III(2)IV(2)).

It localises to the mitochondrion inner membrane. It carries out the reaction 4 Fe(II)-[cytochrome c] + O2 + 8 H(+)(in) = 4 Fe(III)-[cytochrome c] + 2 H2O + 4 H(+)(out). In terms of biological role, component of the cytochrome c oxidase, the last enzyme in the mitochondrial electron transport chain which drives oxidative phosphorylation. The respiratory chain contains 3 multisubunit complexes succinate dehydrogenase (complex II, CII), ubiquinol-cytochrome c oxidoreductase (cytochrome b-c1 complex, complex III, CIII) and cytochrome c oxidase (complex IV, CIV), that cooperate to transfer electrons derived from NADH and succinate to molecular oxygen, creating an electrochemical gradient over the inner membrane that drives transmembrane transport and the ATP synthase. Cytochrome c oxidase is the component of the respiratory chain that catalyzes the reduction of oxygen to water. Electrons originating from reduced cytochrome c in the intermembrane space (IMS) are transferred via the dinuclear copper A center (CU(A)) of subunit 2 and heme A of subunit 1 to the active site in subunit 1, a binuclear center (BNC) formed by heme A3 and copper B (CU(B)). The BNC reduces molecular oxygen to 2 water molecules using 4 electrons from cytochrome c in the IMS and 4 protons from the mitochondrial matrix. The chain is Cytochrome c oxidase subunit 3 (mt-co3) from Formosania lacustris (Oriental stream loach).